The sequence spans 888 residues: Tyrosine-protein kinase receptor UFO (888 aa).

An N-terminal signal peptide occupies residues 1 to 18; the sequence is MGRVPLAWWLALCCWGCA. Residues 19 to 86 form an interaction with GAS6 region; it reads AHKDTQTEAG…QTQVPLGEDW (68 aa). Over 19–445 the chain is Extracellular; the sequence is AHKDTQTEAG…PPRAFSWPWW (427 aa). Ig-like C2-type domains follow at residues 30–122 and 133–216; these read PFVG…TFVS and PYFL…ATIT. N37 is a glycosylation site (N-linked (GlcNAc...) asparagine). The cysteines at positions 50 and 111 are disulfide-linked. N151 and N192 each carry an N-linked (GlcNAc...) asparagine glycan. C154 and C199 are joined by a disulfide. Fibronectin type-III domains lie at 221–325 and 330–422; these read RPHH…TTEG and PPEN…PWRP. N-linked (GlcNAc...) asparagine glycosylation is found at N333, N339, and N395. The chain crosses the membrane as a helical span at residues 446 to 466; sequence YVLLGALVAAACVLILALFLV. Topologically, residues 467 to 888 are cytoplasmic; the sequence is HRRKKETRYG…PAPPGQEDGA (422 aa). The Protein kinase domain maps to 530-801; sequence VALGKTLGEG…ELREDLENTL (272 aa). Residues 536–544 and K561 each bind ATP; that span reads LGEGEFGAV. The active-site Proton acceptor is the D666. 3 positions are modified to phosphotyrosine; by autocatalysis: Y697, Y773, and Y815. Residues 820–846 form a disordered region; that stretch reads EGGSHLEPRGAAGGADPPTQPDPKDSC. Y860 is subject to Phosphotyrosine; by autocatalysis. The tract at residues 865-888 is disordered; that stretch reads STAPGPTLSADRGCPAPPGQEDGA.

Belongs to the protein kinase superfamily. Tyr protein kinase family. AXL/UFO subfamily. In terms of assembly, heterodimer and heterotetramer with ligand GAS6. Interacts with CBL, GRB2, LCK, NCK2, PIK3R1, PIK3R2, PIK3R3, PLCG1, SOCS1 and TNS2. Part of a complex including AXL, TNK2 and GRB2, in which GRB2 promotes AXL recruitment by TNK2. In terms of processing, monoubiquitinated upon GAS6-binding. A very small proportion of the receptor could be subjected to polyubiquitination in a very transient fashion. Phosphorylated at tyrosine residues by autocatalysis, which activates kinase activity. In distinct substructures of a broad spectrum of developing tissues (in the late embryogenesis). In cells forming organ capsules as well as in connective tissue structures (in adult).

The protein resides in the cell membrane. It catalyses the reaction L-tyrosyl-[protein] + ATP = O-phospho-L-tyrosyl-[protein] + ADP + H(+). Its activity is regulated as follows. Activated by GAS6-binding and subsequent autophosphorylation. In terms of biological role, receptor tyrosine kinase that transduces signals from the extracellular matrix into the cytoplasm by binding growth factor GAS6 and which is thus regulating many physiological processes including cell survival, cell proliferation, migration and differentiation. Ligand binding at the cell surface induces dimerization and autophosphorylation of AXL. Following activation by ligand, AXL binds and induces tyrosine phosphorylation of PI3-kinase subunits PIK3R1, PIK3R2 and PIK3R3; but also GRB2, PLCG1, LCK and PTPN11. Other downstream substrate candidates for AXL are CBL, NCK2, SOCS1 and TNS2. Recruitment of GRB2 and phosphatidylinositol 3 kinase regulatory subunits by AXL leads to the downstream activation of the AKT kinase. GAS6/AXL signaling plays a role in various processes such as endothelial cell survival during acidification by preventing apoptosis, optimal cytokine signaling during human natural killer cell development, hepatic regeneration, gonadotropin-releasing hormone neuron survival and migration, platelet activation, or regulation of thrombotic responses. Also plays an important role in inhibition of Toll-like receptors (TLRs)-mediated innate immune response. This is Tyrosine-protein kinase receptor UFO (Axl) from Mus musculus (Mouse).